Here is a 188-residue protein sequence, read N- to C-terminus: Elongation factor P-like protein (188 aa).

Belongs to the elongation factor P family.

The polypeptide is Elongation factor P-like protein (Vibrio parahaemolyticus serotype O3:K6 (strain RIMD 2210633)).